A 432-amino-acid chain; its full sequence is Adenylosuccinate synthetase (432 aa).

GTP is bound by residues 13-19 (GDEGKGK) and 41-43 (GHT). The active-site Proton acceptor is the Asp-14. Residues Asp-14 and Gly-41 each coordinate Mg(2+). Residues 14-17 (DEGK), 39-42 (NAGH), Thr-130, Arg-144, Gln-225, Thr-240, and Arg-304 contribute to the IMP site. His-42 functions as the Proton donor in the catalytic mechanism. 300-306 (ATTGRRR) is a substrate binding site. GTP contacts are provided by residues Arg-306, 332–334 (KLD), and 415–417 (STG).

The protein belongs to the adenylosuccinate synthetase family. As to quaternary structure, homodimer. It depends on Mg(2+) as a cofactor.

It localises to the cytoplasm. The catalysed reaction is IMP + L-aspartate + GTP = N(6)-(1,2-dicarboxyethyl)-AMP + GDP + phosphate + 2 H(+). The protein operates within purine metabolism; AMP biosynthesis via de novo pathway; AMP from IMP: step 1/2. In terms of biological role, plays an important role in the de novo pathway of purine nucleotide biosynthesis. Catalyzes the first committed step in the biosynthesis of AMP from IMP. This is Adenylosuccinate synthetase from Serratia proteamaculans (strain 568).